The sequence spans 180 residues: tRNA (cytidine(56)-2'-O)-methyltransferase (180 aa).

S-adenosyl-L-methionine contacts are provided by residues Leu84 and 112-116; that span reads GAEKV.

The protein belongs to the aTrm56 family. In terms of assembly, homodimer.

It is found in the cytoplasm. The catalysed reaction is cytidine(56) in tRNA + S-adenosyl-L-methionine = 2'-O-methylcytidine(56) in tRNA + S-adenosyl-L-homocysteine + H(+). Its function is as follows. Specifically catalyzes the AdoMet-dependent 2'-O-ribose methylation of cytidine at position 56 in tRNAs. This chain is tRNA (cytidine(56)-2'-O)-methyltransferase, found in Natronomonas pharaonis (strain ATCC 35678 / DSM 2160 / CIP 103997 / JCM 8858 / NBRC 14720 / NCIMB 2260 / Gabara) (Halobacterium pharaonis).